Consider the following 120-residue polypeptide: Large ribosomal subunit protein uL18 (120 aa).

The protein belongs to the universal ribosomal protein uL18 family. In terms of assembly, part of the 50S ribosomal subunit; part of the 5S rRNA/L5/L18/L25 subcomplex. Contacts the 5S and 23S rRNAs.

Its function is as follows. This is one of the proteins that bind and probably mediate the attachment of the 5S RNA into the large ribosomal subunit, where it forms part of the central protuberance. The protein is Large ribosomal subunit protein uL18 of Synechococcus elongatus (strain ATCC 33912 / PCC 7942 / FACHB-805) (Anacystis nidulans R2).